A 158-amino-acid chain; its full sequence is 6,7-dimethyl-8-ribityllumazine synthase (158 aa).

Residues Phe-22, Ala-57 to Glu-59, and Ala-81 to Ile-83 contribute to the 5-amino-6-(D-ribitylamino)uracil site. Residue Gly-86–Thr-87 coordinates (2S)-2-hydroxy-3-oxobutyl phosphate. His-89 serves as the catalytic Proton donor. Residue Phe-114 coordinates 5-amino-6-(D-ribitylamino)uracil. Arg-128 is a binding site for (2S)-2-hydroxy-3-oxobutyl phosphate.

The protein belongs to the DMRL synthase family. Forms an icosahedral capsid composed of 60 subunits, arranged as a dodecamer of pentamers.

The enzyme catalyses (2S)-2-hydroxy-3-oxobutyl phosphate + 5-amino-6-(D-ribitylamino)uracil = 6,7-dimethyl-8-(1-D-ribityl)lumazine + phosphate + 2 H2O + H(+). It participates in cofactor biosynthesis; riboflavin biosynthesis; riboflavin from 2-hydroxy-3-oxobutyl phosphate and 5-amino-6-(D-ribitylamino)uracil: step 1/2. In terms of biological role, catalyzes the formation of 6,7-dimethyl-8-ribityllumazine by condensation of 5-amino-6-(D-ribitylamino)uracil with 3,4-dihydroxy-2-butanone 4-phosphate. This is the penultimate step in the biosynthesis of riboflavin. The protein is 6,7-dimethyl-8-ribityllumazine synthase of Pseudoalteromonas atlantica (strain T6c / ATCC BAA-1087).